Reading from the N-terminus, the 482-residue chain is Glycogen synthase 2 (482 aa).

Lys-18 contacts ADP-alpha-D-glucose.

This sequence belongs to the glycosyltransferase 1 family. Bacterial/plant glycogen synthase subfamily.

It carries out the reaction [(1-&gt;4)-alpha-D-glucosyl](n) + ADP-alpha-D-glucose = [(1-&gt;4)-alpha-D-glucosyl](n+1) + ADP + H(+). It participates in glycan biosynthesis; glycogen biosynthesis. In terms of biological role, synthesizes alpha-1,4-glucan chains using ADP-glucose. This chain is Glycogen synthase 2, found in Bradyrhizobium diazoefficiens (strain JCM 10833 / BCRC 13528 / IAM 13628 / NBRC 14792 / USDA 110).